Here is a 691-residue protein sequence, read N- to C-terminus: DNA topoisomerase 1 (691 aa).

The 112-residue stretch at 3-114 (DYLVIVESPA…DCRVVFNEIT (112 aa)) folds into the Toprim domain. Residues E9 and D82 each coordinate Mg(2+). Residues 129–558 (NMDLVDAQQA…NFYTDFEKRV (430 aa)) form the Topo IA-type catalytic domain. Positions 163–168 (SAGRVQ) are interaction with DNA. Catalysis depends on Y298, which acts as the O-(5'-phospho-DNA)-tyrosine intermediate. 3 C4-type zinc fingers span residues 579-605 (CELCSSPMVYKMGRYGKFLACSNFPDC), 619-647 (CPSCGEGNIVERKSKKKRVFYGCDRYPDC), and 660-683 (CPKCGKMLVEKKLKKGIQVQCVEC).

Belongs to the type IA topoisomerase family. As to quaternary structure, monomer. Interacts with the RNA polymerase core. It depends on Mg(2+) as a cofactor.

The enzyme catalyses ATP-independent breakage of single-stranded DNA, followed by passage and rejoining.. Functionally, releases the supercoiling and torsional tension of DNA, which is introduced during the DNA replication and transcription, by transiently cleaving and rejoining one strand of the DNA duplex. Introduces a single-strand break via transesterification at a target site in duplex DNA. The scissile phosphodiester is attacked by the catalytic tyrosine of the enzyme, resulting in the formation of a DNA-(5'-phosphotyrosyl)-enzyme intermediate and the expulsion of a 3'-OH DNA strand. The free DNA strand then undergoes passage around the unbroken strand, thus removing DNA supercoils. Finally, in the religation step, the DNA 3'-OH attacks the covalent intermediate to expel the active-site tyrosine and restore the DNA phosphodiester backbone. The sequence is that of DNA topoisomerase 1 from Bacillus subtilis (strain 168).